A 446-amino-acid chain; its full sequence is tRNA modification GTPase MnmE (446 aa).

(6S)-5-formyl-5,6,7,8-tetrahydrofolate-binding residues include Arg24, Glu81, and Lys120. Positions 216–368 (GLHAVLIGPP…LHIRLRELAL (153 aa)) constitute a TrmE-type G domain. K(+) is bound at residue Asn226. GTP is bound by residues 226–231 (NAGKSS), 245–251 (TDVAGTT), and 270–273 (DTAG). A Mg(2+)-binding site is contributed by Ser230. K(+) contacts are provided by Thr245, Val247, and Thr250. A Mg(2+)-binding site is contributed by Thr251. Lys446 is a (6S)-5-formyl-5,6,7,8-tetrahydrofolate binding site.

This sequence belongs to the TRAFAC class TrmE-Era-EngA-EngB-Septin-like GTPase superfamily. TrmE GTPase family. In terms of assembly, homodimer. Heterotetramer of two MnmE and two MnmG subunits. K(+) serves as cofactor.

It is found in the cytoplasm. In terms of biological role, exhibits a very high intrinsic GTPase hydrolysis rate. Involved in the addition of a carboxymethylaminomethyl (cmnm) group at the wobble position (U34) of certain tRNAs, forming tRNA-cmnm(5)s(2)U34. This Xanthomonas oryzae pv. oryzae (strain MAFF 311018) protein is tRNA modification GTPase MnmE.